The primary structure comprises 365 residues: Flagellar P-ring protein (365 aa).

An N-terminal signal peptide occupies residues 1 to 21 (MKSLRLVALFCCLLPLGMAHA).

It belongs to the FlgI family. In terms of assembly, the basal body constitutes a major portion of the flagellar organelle and consists of four rings (L,P,S, and M) mounted on a central rod.

It localises to the periplasm. The protein localises to the bacterial flagellum basal body. In terms of biological role, assembles around the rod to form the L-ring and probably protects the motor/basal body from shearing forces during rotation. This chain is Flagellar P-ring protein, found in Aeromonas hydrophila subsp. hydrophila (strain ATCC 7966 / DSM 30187 / BCRC 13018 / CCUG 14551 / JCM 1027 / KCTC 2358 / NCIMB 9240 / NCTC 8049).